The chain runs to 176 residues: Macro domain-containing protein lmo2759 (176 aa).

Residues 1-175 form the Macro domain; the sequence is MEITIVKGDI…LYNKLINSEV (175 aa).

Belongs to the MacroD-type family.

The polypeptide is Macro domain-containing protein lmo2759 (Listeria monocytogenes serovar 1/2a (strain ATCC BAA-679 / EGD-e)).